We begin with the raw amino-acid sequence, 246 residues long: Orotidine 5'-phosphate decarboxylase (246 aa).

Substrate is bound by residues aspartate 22, lysine 44, 71–80, threonine 130, arginine 191, glutamine 201, glycine 221, and arginine 222; that span reads DLKYHDIPHT. Lysine 73 functions as the Proton donor in the catalytic mechanism.

This sequence belongs to the OMP decarboxylase family. Type 1 subfamily. As to quaternary structure, homodimer.

The catalysed reaction is orotidine 5'-phosphate + H(+) = UMP + CO2. It functions in the pathway pyrimidine metabolism; UMP biosynthesis via de novo pathway; UMP from orotate: step 2/2. Catalyzes the decarboxylation of orotidine 5'-monophosphate (OMP) to uridine 5'-monophosphate (UMP). This is Orotidine 5'-phosphate decarboxylase from Neisseria meningitidis serogroup C (strain 053442).